Reading from the N-terminus, the 245-residue chain is MAGHSKWKNIQRRKNAQDAKRGKLFMKLAKEIYVAAKMGGGDPTTNATLRLAIEKAKSANMPNENIERAIKKATGNQEHTHYEEIRYEGYGPGGVAVMVICLTDNKNRTASNVRVAFSKNGGNLGETGCVSYLFDRKGLIVIARENLHIDEDDMLLQAIEAGADEMETTEDSFEIYTSPEQFEQVKNTLAAQGFTFATAEITMIPQTYTTLTGDDLTKMLKLIDMLEDDDDVQEIYHNLDESMLE.

The segment covering 1-14 (MAGHSKWKNIQRRK) has biased composition (basic residues). Positions 1-21 (MAGHSKWKNIQRRKNAQDAKR) are disordered.

Belongs to the TACO1 family.

It is found in the cytoplasm. The sequence is that of Probable transcriptional regulatory protein Aflv_0709 from Anoxybacillus flavithermus (strain DSM 21510 / WK1).